Consider the following 311-residue polypeptide: ADP-ribosyl cyclase/cyclic ADP-ribose hydrolase 2 (311 aa).

The first 24 residues, 1–24 (MAVQGGLLSLWLWLWLSLLTVLLG), serve as a signal peptide directing secretion. Intrachain disulfides connect cysteine 46–cysteine 60, cysteine 76–cysteine 156, and cysteine 137–cysteine 150. N-linked (GlcNAc...) asparagine glycosylation is found at asparagine 59 and asparagine 88. Position 102 (tryptophan 102) interacts with NAD(+). Tryptophan 102 contributes to the nicotinamide binding site. The N-linked (GlcNAc...) asparagine glycan is linked to asparagine 141. Tryptophan 165 lines the NAD(+) pocket. N-linked (GlcNAc...) asparagine glycosylation occurs at asparagine 185. Glutamate 203 provides a ligand contact to NAD(+). 2 disulfide bridges follow: cysteine 231/cysteine 252 and cysteine 264/cysteine 273. A lipid anchor (GPI-anchor amidated serine) is attached at serine 286. Positions 287 to 311 (ASLHAIGDASLLISLLVALASSSQA) are excised as a propeptide.

It belongs to the ADP-ribosyl cyclase family. Homodimer. In terms of tissue distribution, expressed in the bone marrow, spleen and thymus in lymphoid organs, and the lung, kidney and heart in non-lymphoid organs.

The protein resides in the cell membrane. It carries out the reaction NAD(+) + H2O = ADP-D-ribose + nicotinamide + H(+). It catalyses the reaction NAD(+) = cyclic ADP-beta-D-ribose + nicotinamide + H(+). The catalysed reaction is cyclic ADP-beta-D-ribose + H2O = ADP-D-ribose. Its function is as follows. Catalyzes both the synthesis of cyclic ADP-beta-D-ribose (cADPR) from NAD(+), and its hydrolysis to ADP-D-ribose (ADPR). Cyclic ADPR is known to serve as an endogenous second messenger that elicits calcium release from intracellular stores, and thus regulates the mobilization of intracellular calcium. May be involved in pre-B-cell growth. This chain is ADP-ribosyl cyclase/cyclic ADP-ribose hydrolase 2 (Bst1), found in Mus musculus (Mouse).